The following is a 374-amino-acid chain: Pre-B-cell leukemia transcription factor 4 (374 aa).

One can recognise a PBC domain in the interval 14–209 (PRRLDTSDVL…VMTLRSRLLD (196 aa)). A PBC-A region spans residues 21 to 100 (DVLQQIMAIT…EGVCRPEKRG (80 aa)). The segment at 103-209 (GAVARAGTAT…VMTLRSRLLD (107 aa)) is PBC-B. Positions 210 to 272 (ARRKRRNFSK…NKRIRYKKNM (63 aa)) form a DNA-binding region, homeobox; TALE-type. The interval 333–374 (QPPPGGGCLQSQAQGSWQGATPQPATASPAGDPGSINSSTSN) is disordered. Over residues 341–358 (LQSQAQGSWQGATPQPAT) the composition is skewed to polar residues.

Belongs to the TALE/PBX homeobox family.

The protein resides in the nucleus. The polypeptide is Pre-B-cell leukemia transcription factor 4 (PBX4) (Homo sapiens (Human)).